We begin with the raw amino-acid sequence, 405 residues long: Imidazolonepropionase (405 aa).

Positions 73 and 75 each coordinate Fe(3+). Zn(2+)-binding residues include H73 and H75. R82, Y145, and H178 together coordinate 4-imidazolone-5-propanoate. Y145 lines the N-formimidoyl-L-glutamate pocket. H243 serves as a coordination point for Fe(3+). H243 lines the Zn(2+) pocket. A 4-imidazolone-5-propanoate-binding site is contributed by Q246. D318 is a Fe(3+) binding site. A Zn(2+)-binding site is contributed by D318. Positions 320 and 322 each coordinate N-formimidoyl-L-glutamate. T323 contributes to the 4-imidazolone-5-propanoate binding site.

Belongs to the metallo-dependent hydrolases superfamily. HutI family. The cofactor is Zn(2+). Fe(3+) serves as cofactor.

It localises to the cytoplasm. The enzyme catalyses 4-imidazolone-5-propanoate + H2O = N-formimidoyl-L-glutamate. It functions in the pathway amino-acid degradation; L-histidine degradation into L-glutamate; N-formimidoyl-L-glutamate from L-histidine: step 3/3. Its function is as follows. Catalyzes the hydrolytic cleavage of the carbon-nitrogen bond in imidazolone-5-propanoate to yield N-formimidoyl-L-glutamate. It is the third step in the universal histidine degradation pathway. This chain is Imidazolonepropionase, found in Brucella suis biovar 1 (strain 1330).